Reading from the N-terminus, the 213-residue chain is ATP phosphoribosyltransferase (213 aa).

The protein belongs to the ATP phosphoribosyltransferase family. Short subfamily. As to quaternary structure, heteromultimer composed of HisG and HisZ subunits.

Its subcellular location is the cytoplasm. The enzyme catalyses 1-(5-phospho-beta-D-ribosyl)-ATP + diphosphate = 5-phospho-alpha-D-ribose 1-diphosphate + ATP. It participates in amino-acid biosynthesis; L-histidine biosynthesis; L-histidine from 5-phospho-alpha-D-ribose 1-diphosphate: step 1/9. In terms of biological role, catalyzes the condensation of ATP and 5-phosphoribose 1-diphosphate to form N'-(5'-phosphoribosyl)-ATP (PR-ATP). Has a crucial role in the pathway because the rate of histidine biosynthesis seems to be controlled primarily by regulation of HisG enzymatic activity. This is ATP phosphoribosyltransferase from Listeria monocytogenes serotype 4b (strain F2365).